The sequence spans 332 residues: Ribosomal RNA small subunit methyltransferase H (332 aa).

S-adenosyl-L-methionine contacts are provided by residues 38-40 (GGY), Asp56, Phe83, Asp104, and Gln111. The tract at residues 309-332 (TETPFSEDISRPDTHIPRSRRQSA) is disordered.

The protein belongs to the methyltransferase superfamily. RsmH family.

It localises to the cytoplasm. The enzyme catalyses cytidine(1402) in 16S rRNA + S-adenosyl-L-methionine = N(4)-methylcytidine(1402) in 16S rRNA + S-adenosyl-L-homocysteine + H(+). In terms of biological role, specifically methylates the N4 position of cytidine in position 1402 (C1402) of 16S rRNA. The polypeptide is Ribosomal RNA small subunit methyltransferase H (Zymomonas mobilis subsp. mobilis (strain ATCC 31821 / ZM4 / CP4)).